A 233-amino-acid chain; its full sequence is H-2 class II histocompatibility antigen, A-F alpha chain (233 aa).

The alpha-1 stretch occupies residues 1–88; the sequence is EDDIEADHVG…KRSNFTPATN (88 aa). At 1 to 195 the chain is on the extracellular side; that stretch reads EDDIEADHVG…IPAPMSELTE (195 aa). The interval 89–182 is alpha-2; sequence EAPQATVFPK…GLEEPVLKHW (94 aa). The region spanning 91–183 is the Ig-like C1-type domain; it reads PQATVFPKSP…LEEPVLKHWE (93 aa). Cys-111 and Cys-167 form a disulfide bridge. N-linked (GlcNAc...) asparagine glycosylation occurs at Asn-122. Residues 183–195 form a connecting peptide region; the sequence is EPEIPAPMSELTE. A helical transmembrane segment spans residues 196–221; sequence TVVCALGLSVGLVGIVVGTIFIIQGL. At 222–233 the chain is on the cytoplasmic side; that stretch reads RSGGTSRHPGPL.

Belongs to the MHC class II family.

The protein resides in the membrane. The chain is H-2 class II histocompatibility antigen, A-F alpha chain (H2-Aa) from Mus musculus (Mouse).